Here is a 430-residue protein sequence, read N- to C-terminus: Adenylosuccinate synthetase (430 aa).

GTP is bound by residues 12–18 and 40–42; these read GDEGKGK and GHT. Asp-13 functions as the Proton acceptor in the catalytic mechanism. Asp-13 and Gly-40 together coordinate Mg(2+). IMP contacts are provided by residues 13 to 16, 38 to 41, Thr-128, Arg-142, Gln-223, Thr-238, and Arg-302; these read DEGK and NAGH. His-41 serves as the catalytic Proton donor. Residue 298-304 participates in substrate binding; that stretch reads TVTKRPR. GTP-binding positions include Arg-304, 330 to 332, and 412 to 414; these read CVD and SVG.

Belongs to the adenylosuccinate synthetase family. As to quaternary structure, homodimer. It depends on Mg(2+) as a cofactor.

Its subcellular location is the cytoplasm. The catalysed reaction is IMP + L-aspartate + GTP = N(6)-(1,2-dicarboxyethyl)-AMP + GDP + phosphate + 2 H(+). It functions in the pathway purine metabolism; AMP biosynthesis via de novo pathway; AMP from IMP: step 1/2. Functionally, plays an important role in the de novo pathway of purine nucleotide biosynthesis. Catalyzes the first committed step in the biosynthesis of AMP from IMP. In Ligilactobacillus salivarius (strain UCC118) (Lactobacillus salivarius), this protein is Adenylosuccinate synthetase.